A 159-amino-acid chain; its full sequence is MNNFLISLALQESSTEVQGGLFDFNATLPLMALQFLALTIILNLIYYKPLGKILDERDEYIANSLTAASAALSKANDLTKRYEQDLAESRKKAQDIIKNAQQDAQNIVSSKIKEAQKDADQLMSNTYDQLNIQKEQALQNLEKQVDILSNQIQIKLLGN.

The chain crosses the membrane as a helical span at residues Leu30–Tyr47.

The protein belongs to the ATPase B chain family. In terms of assembly, F-type ATPases have 2 components, F(1) - the catalytic core - and F(0) - the membrane proton channel. F(1) has five subunits: alpha(3), beta(3), gamma(1), delta(1), epsilon(1). F(0) has four main subunits: a(1), b(1), b'(1) and c(10-14). The alpha and beta chains form an alternating ring which encloses part of the gamma chain. F(1) is attached to F(0) by a central stalk formed by the gamma and epsilon chains, while a peripheral stalk is formed by the delta, b and b' chains.

Its subcellular location is the plastid. It localises to the chloroplast thylakoid membrane. F(1)F(0) ATP synthase produces ATP from ADP in the presence of a proton or sodium gradient. F-type ATPases consist of two structural domains, F(1) containing the extramembraneous catalytic core and F(0) containing the membrane proton channel, linked together by a central stalk and a peripheral stalk. During catalysis, ATP synthesis in the catalytic domain of F(1) is coupled via a rotary mechanism of the central stalk subunits to proton translocation. Its function is as follows. Component of the F(0) channel, it forms part of the peripheral stalk, linking F(1) to F(0). The b'-subunit is a diverged and duplicated form of b found in plants and photosynthetic bacteria. In Antithamnion sp. (Red alga), this protein is ATP synthase subunit b', chloroplastic.